A 224-amino-acid polypeptide reads, in one-letter code: Precorrin-2 dehydrogenase (224 aa).

NAD(+) is bound by residues 26–27 (SV) and 47–50 (EFSQ).

Belongs to the precorrin-2 dehydrogenase / sirohydrochlorin ferrochelatase family. Homodimer.

The catalysed reaction is precorrin-2 + NAD(+) = sirohydrochlorin + NADH + 2 H(+). The protein operates within porphyrin-containing compound metabolism; siroheme biosynthesis; sirohydrochlorin from precorrin-2: step 1/1. In terms of biological role, involved in the archaeal biosynthesis of heme. Catalyzes the oxiation of precorrin-2 into sirohydroclorin. This Methanosarcina barkeri (strain Fusaro / DSM 804) protein is Precorrin-2 dehydrogenase.